Consider the following 2542-residue polypeptide: Zinc finger FYVE domain-containing protein 26 (2542 aa).

Disordered regions lie at residues 591-658 (HLPE…GPHT) and 740-811 (VTSN…QVEA). Ser612 and Ser616 each carry phosphoserine. The segment covering 752–772 (RRYRPTAKRHSSLRRGRRTRR) has biased composition (basic residues). Residues 785 to 803 (SLEGTSSELSTSTSEGSLS) show a composition bias toward low complexity. A Phosphoserine modification is found at Ser798. Residues 866–891 (MFVERYQEVIQELARVEHKIENQNSD) adopt a coiled-coil conformation. Residues 1273–1292 (SPRPSENPSAERKSDSSPKD) form a disordered region. A compositionally biased stretch (basic and acidic residues) spans 1281–1290 (SAERKSDSSP). A coiled-coil region spans residues 1495–1522 (VSDMAVPEELKSELQRKLTELRVYQKIL). Phosphoserine occurs at positions 1739, 1761, 1783, and 1785. Residues 1746–1807 (PVHQASDPET…LEFVPPETPP (62 aa)) form a disordered region. Low complexity predominate over residues 1757–1779 (SRSSSAEFSAAAAAPAPAAPGSA). The FYVE-type zinc-finger motif lies at 1815–1875 (DETESMCMVC…VCDQCYSYYN (61 aa)). The Zn(2+) site is built by Cys1821, Cys1824, Cys1838, Cys1841, Cys1846, Cys1849, Cys1867, and Cys1870.

The protein belongs to the ZFYVE26 family. Interacts with AP5Z1, AP5B1, AP5S1 and SPG11. Interacts with TTC19 and KIF13A.

It localises to the cytoplasm. Its subcellular location is the cytoskeleton. The protein localises to the microtubule organizing center. The protein resides in the centrosome. It is found in the midbody. Phosphatidylinositol 3-phosphate-binding protein required for the abscission step in cytokinesis: recruited to the midbody during cytokinesis and acts as a regulator of abscission. May also be required for efficient homologous recombination DNA double-strand break repair. The polypeptide is Zinc finger FYVE domain-containing protein 26 (Zfyve26) (Rattus norvegicus (Rat)).